The sequence spans 259 residues: uncharacterized protein (259 aa).

Residues methionine 1 to threonine 19 constitute a signal peptide (or 26). Glycine 214–threonine 221 contributes to the ATP binding site.

This is an uncharacterized protein from Bacillus subtilis (strain 168).